The primary structure comprises 55 residues: Large ribosomal subunit protein bL33 (55 aa).

This sequence belongs to the bacterial ribosomal protein bL33 family.

The chain is Large ribosomal subunit protein bL33 from Orientia tsutsugamushi (strain Boryong) (Rickettsia tsutsugamushi).